Here is a 309-residue protein sequence, read N- to C-terminus: Ubiquitin-conjugating enzyme E2 32 (309 aa).

The region spanning 11 to 166 (PAVKRILQEV…ERQKIIDEIH (156 aa)) is the UBC core domain. C93 (glycyl thioester intermediate) is an active-site residue. The helical transmembrane segment at 275–295 (FTWAAVGLTIAIMVLLLKKFI) threads the bilayer.

This sequence belongs to the ubiquitin-conjugating enzyme family.

It localises to the membrane. The enzyme catalyses S-ubiquitinyl-[E1 ubiquitin-activating enzyme]-L-cysteine + [E2 ubiquitin-conjugating enzyme]-L-cysteine = [E1 ubiquitin-activating enzyme]-L-cysteine + S-ubiquitinyl-[E2 ubiquitin-conjugating enzyme]-L-cysteine.. The protein operates within protein modification; protein ubiquitination. Accepts the ubiquitin from the E1 complex and catalyzes its covalent attachment to other proteins. In Arabidopsis thaliana (Mouse-ear cress), this protein is Ubiquitin-conjugating enzyme E2 32 (UBC32).